Reading from the N-terminus, the 259-residue chain is Adenylate kinase (259 aa).

52 to 57 (GAGKGT) contributes to the ATP binding site. Residues 72–101 (ATGDMLRSQVAKKTDLGREAKKIMDQGGLV) are NMP. AMP-binding positions include T73, R78, 99-101 (GLV), 128-131 (GFPR), and Q135. Positions 169–206 (GRLVHPASGRSYHKIFNPPKEAMKDDITGEPLVQRSDD) are LID. Residues R170 and 179–180 (SY) each bind ATP. R203 and R214 together coordinate AMP. ATP is bound at residue Q242.

Belongs to the adenylate kinase family. AK2 subfamily. In terms of assembly, monomer.

The protein localises to the cytoplasm. It localises to the mitochondrion intermembrane space. The enzyme catalyses AMP + ATP = 2 ADP. Functionally, catalyzes the reversible transfer of the terminal phosphate group between ATP and AMP. Plays an important role in cellular energy homeostasis and in adenine nucleotide metabolism. Adenylate kinase activity is critical for regulation of the phosphate utilization and the AMP de novo biosynthesis pathways. The chain is Adenylate kinase (adk1) from Emericella nidulans (strain FGSC A4 / ATCC 38163 / CBS 112.46 / NRRL 194 / M139) (Aspergillus nidulans).